Here is a 1863-residue protein sequence, read N- to C-terminus: Breast cancer type 1 susceptibility protein homolog (1863 aa).

N-acetylmethionine is present on M1. An RING-type zinc finger spans residues 24–65; it reads CPICLELIKEPVSTKCDHIFCRFCMLKLLNQKKGPSQCPLCK. A Glycyl lysine isopeptide (Lys-Gly) (interchain with G-Cter in SUMO2) cross-link involves residue K109. The residue at position 114 (S114) is a Phosphoserine. 2 stretches are compositionally biased toward basic and acidic residues: residues 231–240 and 248–260; these read KDITNTEHHQ and TTEK…HPEK. The disordered stretch occupies residues 231–266; that stretch reads KDITNTEHHQSSNNDLNTTEKHATERHPEKYQGSSV. A Glycyl lysine isopeptide (Lys-Gly) (interchain with G-Cter in SUMO2) cross-link involves residue K300. Residues 305-336 form a disordered region; the sequence is NKSKQPGLARSQHNRWTGSKETCNDRQTPSTE. Over residues 318–334 the composition is skewed to polar residues; the sequence is NRWTGSKETCNDRQTPS. A Glycyl lysine isopeptide (Lys-Gly) (interchain with G-Cter in SUMO2) cross-link involves residue K338. A phosphoserine mark is found at S394, S397, S422, and S433. Glycyl lysine isopeptide (Lys-Gly) (interchain with G-Cter in SUMO2) cross-links involve residues K442, K458, and K518. S550 is subject to Phosphoserine. K582 is covalently cross-linked (Glycyl lysine isopeptide (Lys-Gly) (interchain with G-Cter in SUMO2)). The tract at residues 653-699 is disordered; that stretch reads NYNQMPVRHSRNLQLMEDKESATGAKKSNKPNEQTSKRHASDTFPEL. Residues S693, S707, and S724 each carry the phosphoserine modification. Residues K733 and K738 each participate in a glycyl lysine isopeptide (Lys-Gly) (interchain with G-Cter in SUMO2) cross-link. Phosphoserine occurs at positions 752 and 839. The interval 886-914 is disordered; it reads AHSRSLKKQSPKVTSECEQKEENQGKKES. A compositionally biased stretch (basic and acidic residues) spans 900 to 914; sequence SECEQKEENQGKKES. Residues K917 and K986 each participate in a glycyl lysine isopeptide (Lys-Gly) (interchain with G-Cter in SUMO2) cross-link. Position 987 is a phosphoserine; by CHEK2 (S987). A Phosphoserine modification is found at S1008. Residues 1042 to 1059 show a composition bias toward polar residues; sequence SNINEVGSSTNEVGSSIN. Residues 1042-1062 form a disordered region; the sequence is SNINEVGSSTNEVGSSINEVG. K1079 is covalently cross-linked (Glycyl lysine isopeptide (Lys-Gly) (interchain with G-Cter in SUMO2)). S1143, S1189, S1191, S1211, S1217, S1218, S1280, S1328, S1336, S1342, and S1387 each carry phosphoserine. The disordered stretch occupies residues 1323-1397; sequence RMRHQSESQG…QSEILTTQQR (75 aa). Over residues 1342–1360 the composition is skewed to acidic residues; that stretch reads SDDEERGTGLEEDNQEEQS. Residues 1373-1397 are compositionally biased toward polar residues; it reads ESETSVSEDCSRLSSQSEILTTQQR. A Phosphothreonine modification is found at T1394. Residues 1397 to 1424 form an interaction with PALB2 region; sequence RDTMQDNLIKLQQEMAELEAVLEQHGSQ. 4 positions are modified to phosphoserine: S1423, S1457, S1524, and S1542. A disordered region spans residues 1442-1501; it reads LRNPEQSTSEKAVLTSQKSSEYPINQNPEGLSADKFEVSADSSTSKNKEPGVERSSPSKC. The span at 1445-1470 shows a compositional bias: polar residues; the sequence is PEQSTSEKAVLTSQKSSEYPINQNPE. The tract at residues 1540 to 1618 is disordered; the sequence is EKSGPHDLME…ESAQSPAAAH (79 aa). A compositionally biased stretch (polar residues) spans 1607–1618; sequence VAESAQSPAAAH. BRCT domains follow at residues 1642-1736 and 1756-1855; these read STER…DFEV and PDRK…TYLI.

Heterodimer with BARD1. Part of the BRCA1-associated genome surveillance complex (BASC), which contains BRCA1, MSH2, MSH6, MLH1, ATM, BLM, PMS2 and the MRE11-RAD50-NBN protein (MRN) complex. This association could be a dynamic process changing throughout the cell cycle and within subnuclear domains. Component of the BRCA1-A complex, at least composed of BRCA1, BARD1, UIMC1/RAP80, ABRAXAS1, BRCC3/BRCC36, BABAM2 and BABAM1/NBA1. Interacts (via the BRCT domains) with ABRAXAS1 (phosphorylated form); this is important for recruitment to sites of DNA damage. Can form a heterotetramer with two molecules of ABRAXAS1 (phosphorylated form). Component of the BRCA1-RBBP8 complex. Interacts (via the BRCT domains) with RBBP8 ('Ser-327' phosphorylated form); the interaction ubiquitinates RBBP8, regulates CHEK1 activation, and involves RBBP8 in BRCA1-dependent G2/M checkpoint control on DNA damage. Associates with RNA polymerase II holoenzyme. Interacts with SMC1A, NELFB, DCLRE1C, CLSPN. CHEK1, CHEK2, BAP1, BRCC3, UBXN1 and PCLAF. Interacts (via BRCT domains) with BRIP1 (phosphorylated form). Interacts with FANCD2 (ubiquitinated form). Interacts with H2AX (phosphorylated on 'Ser-140'). Interacts (via the BRCT domains) with ACACA (phosphorylated form); the interaction prevents dephosphorylation of ACACA. Part of a BRCA complex containing BRCA1, BRCA2 and PALB2. Interacts directly with PALB2; the interaction is essential for its function in HRR. Interacts directly with BRCA2; the interaction occurs only in the presence of PALB2 which serves as the bridging protein. Interacts (via the BRCT domains) with LMO4; the interaction represses the transcriptional activity of BRCA1. Interacts (via the BRCT domains) with CCAR2 (via N-terminus); the interaction represses the transcriptional activator activity of BRCA1. Interacts with EXD2. Interacts (via C-terminus) with DHX9; this interaction is direct and links BRCA1 to the RNA polymerase II holoenzyme. Interacts with DNA helicase ZGRF1; the interaction is increased following DNA damage induction. Post-translationally, phosphorylated in response to IR, UV, and various stimuli that cause checkpoint activation, probably by ATM or ATR. Phosphorylation at Ser-987 by CHEK2 regulates mitotic spindle assembly. Phosphorylation by AURKA regulates centrosomal microtubule nucleation. In terms of processing, autoubiquitinated, undergoes 'Lys-6'-linked polyubiquitination. 'Lys-6'-linked polyubiquitination does not promote degradation.

It localises to the nucleus. It is found in the chromosome. The protein resides in the cytoplasm. It carries out the reaction S-ubiquitinyl-[E2 ubiquitin-conjugating enzyme]-L-cysteine + [acceptor protein]-L-lysine = [E2 ubiquitin-conjugating enzyme]-L-cysteine + N(6)-ubiquitinyl-[acceptor protein]-L-lysine.. It participates in protein modification; protein ubiquitination. E3 ubiquitin-protein ligase that specifically mediates the formation of 'Lys-6'-linked polyubiquitin chains and plays a central role in DNA repair by facilitating cellular responses to DNA damage. It is unclear whether it also mediates the formation of other types of polyubiquitin chains. The BRCA1-BARD1 heterodimer coordinates a diverse range of cellular pathways such as DNA damage repair, ubiquitination and transcriptional regulation to maintain genomic stability. Regulates centrosomal microtubule nucleation. Required for appropriate cell cycle arrests after ionizing irradiation in both the S-phase and the G2 phase of the cell cycle. Required for FANCD2 targeting to sites of DNA damage. Inhibits lipid synthesis by binding to inactive phosphorylated ACACA and preventing its dephosphorylation. Contributes to homologous recombination repair (HRR) via its direct interaction with PALB2, fine-tunes recombinational repair partly through its modulatory role in the PALB2-dependent loading of BRCA2-RAD51 repair machinery at DNA breaks. Component of the BRCA1-RBBP8 complex which regulates CHEK1 activation and controls cell cycle G2/M checkpoints on DNA damage via BRCA1-mediated ubiquitination of RBBP8. Acts as a transcriptional activator. The protein is Breast cancer type 1 susceptibility protein homolog (BRCA1) of Macaca mulatta (Rhesus macaque).